The primary structure comprises 289 residues: RNA-binding protein CP31B, chloroplastic (289 aa).

The N-terminal 71 residues, Met1 to Ser71, are a transit peptide targeting the chloroplast. 2 consecutive RRM domains span residues Ala113–Pro191 and Phe207–Glu285.

In terms of processing, ADP-ribosylated by the Pseudomonas syringae type III effector HopU1. ADP-ribosylation reduces the ability of the protein to bind RNA.

The protein resides in the plastid. It is found in the chloroplast. Its function is as follows. Required for specific RNA editing events in chloroplasts and stabilizes specific chloroplast mRNAs. The sequence is that of RNA-binding protein CP31B, chloroplastic from Arabidopsis thaliana (Mouse-ear cress).